Here is an 880-residue protein sequence, read N- to C-terminus: Leucine--tRNA ligase (880 aa).

The 'HIGH' region signature appears at 49 to 59 (PYPSGRIHMGH). The 'KMSKS' region signature appears at 638–642 (KMSKS). Lys-641 contacts ATP.

The protein belongs to the class-I aminoacyl-tRNA synthetase family.

The protein localises to the cytoplasm. The enzyme catalyses tRNA(Leu) + L-leucine + ATP = L-leucyl-tRNA(Leu) + AMP + diphosphate. In Bartonella henselae (strain ATCC 49882 / DSM 28221 / CCUG 30454 / Houston 1) (Rochalimaea henselae), this protein is Leucine--tRNA ligase.